The sequence spans 107 residues: Keratin, type I cytoskeletal 20 (107 aa).

The tract at residues 1–7 (GNLWVGN) is head. A coil 1A region spans residues 8–43 (EKMTMKNLNDRLASYLEKVRSLEQSNSKFELQIKQW). Residues 8–107 (EKMTMKNLND…ETERGIRLAV (100 aa)) enclose the IF rod domain. The tract at residues 44–61 (YESNTPGISRDHSAYLQQ) is linker 1. A coil 1B region spans residues 62 to 107 (IQDLRNQIRDAQLQNARCVLQIDNAKLAAEDFRLKYETERGIRLAV).

This sequence belongs to the intermediate filament family. As to quaternary structure, heterotetramer of two type I and two type II keratins. Associates with KRT8.

Its function is as follows. Plays a significant role in maintaining keratin filament organization in intestinal epithelia. When phosphorylated, plays a role in the secretion of mucin in the small intestine. The sequence is that of Keratin, type I cytoskeletal 20 from Sus scrofa (Pig).